We begin with the raw amino-acid sequence, 2873 residues long: Fibrillin-1 (2873 aa).

A signal peptide spans 1–24 (MRRGGLLEVALAFALLLESYTSHG). The propeptide occupies 25–44 (ADANLEAGSLKETRANRAKR). The segment at 45-81 (RGGGGHDALKGPNVCGSRYNAYCCPGWKTLPGGNQCI) is fibrillin unique N-terminal (FUN) domain. Residues 45–452 (RGGGGHDALK…PPRVLPFNVT (408 aa)) are N-terminal domain. Intrachain disulfides connect cysteine 59-cysteine 68, cysteine 67-cysteine 80, cysteine 85-cysteine 94, cysteine 89-cysteine 100, cysteine 102-cysteine 111, cysteine 119-cysteine 129, cysteine 123-cysteine 134, cysteine 136-cysteine 145, cysteine 150-cysteine 160, cysteine 154-cysteine 166, and cysteine 168-cysteine 177. 3 EGF-like domains span residues 81 to 112 (IVPI…PSCG), 115 to 146 (SIQH…THCG), and 147 to 178 (QPVC…PQCE). Residues 119–329 (CSIRCMNGGS…YTSPDGTRCV (211 aa)) form an interaction with MFAP4 region. The region spanning 184 to 236 (GPCFTVVSNQMCQGQLSGIVCTKTLCCATVGRAWGHPCEMCPAQPHPCRRGFI) is the TB 1 domain. The hybrid domain 1 stretch occupies residues 195–221 (CQGQLSGIVCTKTLCCATVGRAWGHPC). An EGF-like 4; calcium-binding domain is found at 246–287 (DVDECQAIPGMCQGGNCINTVGSFECKCPAGHKFNEVSQKCE). 6 disulfides stabilise this stretch: cysteine 250–cysteine 262, cysteine 257–cysteine 271, cysteine 273–cysteine 286, cysteine 292–cysteine 304, cysteine 299–cysteine 313, and cysteine 315–cysteine 328. Serine 268 carries an O-linked (Glc) serine glycan. Positions 288–329 (DIDECSTIPGVCDGGECTNTVSSYFCKCPPGFYTSPDGTRCV) constitute an EGF-like 5; calcium-binding domain. The TB 2 domain maps to 334-389 (GYCYTALANGRCSNQLPQSITKMQCCCDLGRCWSPGVTVAPEMCPIRSTEDFNKLC). Asparagine 450 carries N-linked (GlcNAc...) asparagine glycosylation. Residues 451–491 (VTDYCQLVRYLCQNGRCIPTPGSYRCECNKGFQLDIRGECI) form the EGF-like 6 domain. Intrachain disulfides connect cysteine 455–cysteine 467, cysteine 462–cysteine 476, cysteine 478–cysteine 490, cysteine 496–cysteine 506, cysteine 501–cysteine 515, cysteine 517–cysteine 530, cysteine 536–cysteine 548, cysteine 543–cysteine 557, cysteine 559–cysteine 572, cysteine 578–cysteine 589, cysteine 584–cysteine 598, cysteine 600–cysteine 613, cysteine 619–cysteine 630, cysteine 625–cysteine 639, and cysteine 641–cysteine 654. A glycan (O-linked (Glc) serine) is linked at serine 473. The EGF-like 7; calcium-binding domain occupies 492-531 (DVDECEKNPCTGGECINNQGSYTCHCRAGYQSTLTRTECR). Residue serine 512 is glycosylated (O-linked (Glc) serine). The 42-residue stretch at 532-573 (DIDECLQNGRICNNGRCINTDGSFHCVCNAGFHVTRDGKNCE) folds into the EGF-like 8; calcium-binding domain. The EGF-like 9; calcium-binding domain occupies 574 to 614 (DMDECSIRNMCLNGMCINEDGSFKCICKPGFQLASDGRYCK). The 41-residue stretch at 615–655 (DINECETPGICMNGRCVNTDGSYRCECFPGLAVGLDGRVCV) folds into the EGF-like 10; calcium-binding domain. The TB 3 domain maps to 661-713 (STCYGGYRRGQCVKPLFGAVTKSECCCASTEYAFGEPCQPCPAQNSAEYQALC). One can recognise an EGF-like 11; calcium-binding domain in the interval 725-766 (DINECALDPDICPNGICENLRGTYKCICNSGYEVDITGKNCV). Cystine bridges form between cysteine 729–cysteine 741, cysteine 736–cysteine 750, cysteine 752–cysteine 765, cysteine 771–cysteine 783, cysteine 778–cysteine 792, cysteine 794–cysteine 807, cysteine 813–cysteine 823, cysteine 818–cysteine 832, cysteine 834–cysteine 847, cysteine 855–cysteine 877, cysteine 864–cysteine 889, cysteine 878–cysteine 892, cysteine 898–cysteine 910, cysteine 916–cysteine 928, cysteine 923–cysteine 937, and cysteine 939–cysteine 952. The EGF-like 12; calcium-binding domain occupies 767 to 808 (DINECVLNSLLCDNGQCRNTPGSFVCTCPKGFVYKPDLKTCE). The region spanning 809–848 (DIDECESSPCINGVCKNSPGSFICECSPESTLDPTKTICI) is the EGF-like 13; calcium-binding domain. One can recognise a TB 4 domain in the interval 853–904 (GTCWQTVIDGRCEININGATLKSECCSSLGAAWGSPCTICQLDPICGKGFSR). Residues 862-887 (GRCEININGATLKSECCSSLGAAWGS) form a hybrid domain 2 region. In terms of domain architecture, EGF-like 14; calcium-binding spans 912–953 (DINECEVFPGVCKNGLCVNSRGSFKCECPNGMTLDATGRICL). The 53-residue stretch at 958 to 1010 (ETCFLKYDDEECTLPIAGRHRMDACCCSVGAAWGTEECEECPLRNSREYEELC) folds into the TB 5 domain. Residues 1030 to 1071 (DINECKMIPSLCTHGKCRNTIGSFKCRCDSGFALDSEERNCT) form the EGF-like 15; calcium-binding domain. 46 disulfide bridges follow: cysteine 1034–cysteine 1046, cysteine 1041–cysteine 1055, cysteine 1057–cysteine 1070, cysteine 1076–cysteine 1088, cysteine 1083–cysteine 1097, cysteine 1099–cysteine 1113, cysteine 1119–cysteine 1131, cysteine 1126–cysteine 1140, cysteine 1142–cysteine 1155, cysteine 1161–cysteine 1173, cysteine 1168–cysteine 1182, cysteine 1184–cysteine 1197, cysteine 1203–cysteine 1214, cysteine 1210–cysteine 1223, cysteine 1225–cysteine 1238, cysteine 1244–cysteine 1256, cysteine 1251–cysteine 1265, cysteine 1267–cysteine 1280, cysteine 1286–cysteine 1298, cysteine 1293–cysteine 1307, cysteine 1309–cysteine 1322, cysteine 1328–cysteine 1341, cysteine 1335–cysteine 1350, cysteine 1352–cysteine 1363, cysteine 1369–cysteine 1382, cysteine 1376–cysteine 1391, cysteine 1393–cysteine 1404, cysteine 1410–cysteine 1422, cysteine 1417–cysteine 1431, cysteine 1433–cysteine 1446, cysteine 1452–cysteine 1463, cysteine 1458–cysteine 1472, cysteine 1474–cysteine 1487, cysteine 1493–cysteine 1504, cysteine 1499–cysteine 1513, cysteine 1515–cysteine 1528, cysteine 1536–cysteine 1564, cysteine 1551–cysteine 1576, cysteine 1565–cysteine 1579, cysteine 1566–cysteine 1591, cysteine 1612–cysteine 1624, cysteine 1619–cysteine 1633, cysteine 1635–cysteine 1648, cysteine 1654–cysteine 1665, cysteine 1660–cysteine 1674, and cysteine 1676–cysteine 1689. N-linked (GlcNAc...) asparagine glycosylation occurs at asparagine 1069. Positions 1072–1114 (DIDECRISPDLCGRGQCVNTPGDFECKCDEGYESGFMMMKNCM) constitute an EGF-like 16; calcium-binding domain. The region spanning 1115–1156 (DIDECQRDPLLCRGGICHNTEGSYRCECPPGHQLSPNISACI) is the EGF-like 17; calcium-binding domain. Residue serine 1137 is glycosylated (O-linked (Glc) serine). Residue asparagine 1151 is glycosylated (N-linked (GlcNAc...) asparagine). An EGF-like 18; calcium-binding domain is found at 1157 to 1198 (DINECELSANLCPHGRCVNLIGKYQCACNPGYHPTHDRLFCV). The 41-residue stretch at 1199 to 1239 (DIDECSIMNGGCETFCTNSDGSYECSCQPGFALMPDQRSCT) folds into the EGF-like 19; calcium-binding domain. Residue serine 1220 is glycosylated (O-linked (Glc) serine). The EGF-like 20; calcium-binding domain maps to 1240–1281 (DIDECEDNPNICDGGQCTNIPGEYRCLCYDGFMASEDMKTCV). The 42-residue stretch at 1282–1323 (DVNECDLNPNICLSGTCENTKGSFICHCDMGYSGKKGKTGCT) folds into the EGF-like 21; calcium-binding domain. Serine 1304 carries O-linked (Glc) serine glycosylation. Residues 1324–1364 (DINECEIGAHNCGRHAVCTNTAGSFKCSCSPGWIGDGIKCT) form the EGF-like 22; calcium-binding domain. Serine 1347 carries O-linked (Glc) serine glycosylation. The EGF-like 23; calcium-binding domain maps to 1365–1405 (DLDECSNGTHMCSQHADCKNTMGSYRCLCKDGYTGDGFTCT). N-linked (GlcNAc...) asparagine glycosylation is present at asparagine 1371. Serine 1388 carries O-linked (Glc) serine glycosylation. Residues 1406-1447 (DLDECSENLNLCGNGQCLNAPGGYRCECDMGFVPSADGKACE) form the EGF-like 24; calcium-binding domain. The 41-residue stretch at 1448-1488 (DIDECSLPNICVFGTCHNLPGLFRCECEIGYELDRSGGNCT) folds into the EGF-like 25; calcium-binding domain. An N-linked (GlcNAc...) asparagine glycan is attached at asparagine 1486. Residues 1489 to 1529 (DVNECLDPTTCISGNCVNTPGSYTCDCPPDFELNPTRVGCV) enclose the EGF-like 26; calcium-binding domain. Serine 1510 carries O-linked (Glc) serine glycosylation. Residues 1530-2733 (DTRSGNCYLD…GYPKRGRKRR (1204 aa)) are C-terminal domain. Positions 1534–1591 (GNCYLDIRPRGDNGDTACSNEIGVGVSKASCCCSLGKAWGTPCELCPSVNTSEYKILC) constitute a TB 6 domain. The Cell attachment site motif lies at 1543–1545 (RGD). N-linked (GlcNAc...) asparagine glycosylation occurs at asparagine 1583. An EGF-like 27; calcium-binding domain is found at 1608-1649 (DIDECQELPGLCQGGKCINTFGSFQCRCPTGYYLNEDTRVCD). Serine 1630 carries an O-linked (Glc) serine glycan. An EGF-like 28; calcium-binding domain is found at 1650–1690 (DVNECETPGICGPGTCYNTVGNYTCICPPDYMQVNGGNNCM). N-linked (GlcNAc...) asparagine glycosylation is present at asparagine 1671. The 56-residue stretch at 1695–1750 (SLCYRNYYADNQTCDGELLFNMTKKMCCCSYNIGRAWNKPCEQCPIPSTDEFATLC) folds into the TB 7 domain. N-linked (GlcNAc...) asparagine glycosylation is found at asparagine 1705 and asparagine 1715. Residues 1768-1809 (DIDECREIPGVCENGVCINMVGSFRCECPVGFFYNDKLLVCE) form the EGF-like 29; calcium-binding domain. 40 cysteine pairs are disulfide-bonded: cysteine 1772/cysteine 1784, cysteine 1779/cysteine 1793, cysteine 1795/cysteine 1808, cysteine 1814/cysteine 1826, cysteine 1820/cysteine 1835, cysteine 1837/cysteine 1849, cysteine 1855/cysteine 1867, cysteine 1862/cysteine 1876, cysteine 1878/cysteine 1891, cysteine 1897/cysteine 1907, cysteine 1902/cysteine 1916, cysteine 1918/cysteine 1930, cysteine 1936/cysteine 1949, cysteine 1944/cysteine 1958, cysteine 1960/cysteine 1973, cysteine 1979/cysteine 1991, cysteine 1986/cysteine 2000, cysteine 2002/cysteine 2013, cysteine 2019/cysteine 2031, cysteine 2026/cysteine 2040, cysteine 2042/cysteine 2055, cysteine 2063/cysteine 2085, cysteine 2072/cysteine 2098, cysteine 2086/cysteine 2101, cysteine 2087/cysteine 2113, cysteine 2133/cysteine 2144, cysteine 2139/cysteine 2153, cysteine 2155/cysteine 2166, cysteine 2172/cysteine 2183, cysteine 2178/cysteine 2192, cysteine 2194/cysteine 2206, cysteine 2212/cysteine 2223, cysteine 2219/cysteine 2232, cysteine 2234/cysteine 2247, cysteine 2253/cysteine 2267, cysteine 2260/cysteine 2276, cysteine 2278/cysteine 2291, cysteine 2297/cysteine 2309, cysteine 2304/cysteine 2318, and cysteine 2320/cysteine 2333. One can recognise an EGF-like 30; calcium-binding domain in the interval 1810–1850 (DIDECQNGPVCQRNAECINTAGSYRCDCKPGYRLTSTGQCN). A glycan (O-linked (Glc) serine) is linked at serine 1832. The 42-residue stretch at 1851–1892 (DRNECQEIPNICSHGQCIDTVGSFYCLCHTGFKTNVDQTMCL) folds into the EGF-like 31; calcium-binding domain. Serine 1873 is a glycosylation site (O-linked (Glc) serine). An EGF-like 32; calcium-binding domain is found at 1893 to 1931 (DINECERDACGNGTCRNTIGSFNCRCNHGFILSHNNDCI). Asparagine 1904 carries an N-linked (GlcNAc...) asparagine glycan. O-linked (Glc) serine glycosylation occurs at serine 1913. The 43-residue stretch at 1932–1974 (DVDECATGNGNLCRNGQCVNTVGSFQCRCNEGYEVAPDGRTCV) folds into the EGF-like 33; calcium-binding domain. The O-linked (Glc) serine glycan is linked to serine 1955. An EGF-like 34; calcium-binding domain is found at 1975–2014 (DINECVLDPGKCAPGTCQNLDGSYRCICPPGYSLQNDKCE). An EGF-like 35; calcium-binding domain is found at 2015 to 2056 (DIDECVEEPEICALGTCSNTEGSFKCLCPEGFSLSSTGRRCQ). An O-linked (Glc) serine glycan is attached at serine 2037. Residues 2061 to 2113 (SYCYAKFEGGKCSSPKSRNHSKQECCCALKGEGWGDPCELCPTEPDEAFRQIC) form the TB 8 domain. A glycan (N-linked (GlcNAc...) asparagine) is linked at asparagine 2079. Residues 2129–2167 (DMDECKEPDVCRHGQCINTDGSYRCECPFGYILEGNECV) enclose the EGF-like 36; calcium-binding domain. Serine 2150 carries an O-linked (Glc) serine glycan. Residues 2168–2207 (DTDECSVGNPCGNGTCKNVIGGFECTCEEGFEPGPMMTCE) form the EGF-like 37; calcium-binding domain. Asparagine 2180 carries an N-linked (GlcNAc...) asparagine glycan. Positions 2208–2248 (DINECAQNPLLCAFRCVNTYGSYECKCPVGYVLREDRRMCK) constitute an EGF-like 38; calcium-binding domain. A glycan (O-linked (Glc) serine) is linked at serine 2229. Residues 2249 to 2292 (DEDECAEGKHDCTEKQMECKNLIGTYMCICGPGYQRRPDGEGCI) form the EGF-like 39; calcium-binding domain. Residues 2293 to 2334 (DENECQTKPGICENGRCLNTLGSYTCECNDGFTASPTQDECL) enclose the EGF-like 40; calcium-binding domain. A glycan (O-linked (Glc) serine) is linked at serine 2315. Residues 2339-2392 (GYCFSEVLQNMCQIGSSNRNPVTKSECCCDGGRGWGPHCEICPFEGTVAYKKLC) enclose the TB 9 domain. In terms of domain architecture, EGF-like 41; calcium-binding spans 2404–2445 (DIDECKVIHDVCRNGECVNDRGSYHCICKTGYTPDITGTACV). 21 cysteine pairs are disulfide-bonded: cysteine 2408/cysteine 2420, cysteine 2415/cysteine 2429, cysteine 2431/cysteine 2444, cysteine 2450/cysteine 2461, cysteine 2457/cysteine 2470, cysteine 2472/cysteine 2485, cysteine 2491/cysteine 2502, cysteine 2498/cysteine 2511, cysteine 2513/cysteine 2524, cysteine 2530/cysteine 2543, cysteine 2537/cysteine 2552, cysteine 2554/cysteine 2567, cysteine 2573/cysteine 2583, cysteine 2579/cysteine 2592, cysteine 2594/cysteine 2607, cysteine 2613/cysteine 2624, cysteine 2619/cysteine 2633, cysteine 2635/cysteine 2648, cysteine 2654/cysteine 2665, cysteine 2661/cysteine 2674, and cysteine 2676/cysteine 2688. The EGF-like 42; calcium-binding domain maps to 2446–2486 (DLNECNQAPKPCNFICKNTEGSYQCSCPKGYILQEDGRSCK). Serine 2467 carries an O-linked (Glc) serine glycan. The region spanning 2487–2525 (DLDECATKQHNCQFLCVNTIGGFTCKCPPGFTQHHTACI) is the EGF-like 43; calcium-binding domain. Residues 2526–2568 (DNNECTSDINLCGSKGVCQNTPGSFTCECQRGFSLDQSGASCE) form the EGF-like 44; calcium-binding domain. Serine 2549 carries O-linked (Glc) serine glycosylation. In terms of domain architecture, EGF-like 45; calcium-binding spans 2569–2608 (DVDECEGNHRCQHGCQNIIGGYRCSCPQGYLQHYQWNQCV). The 41-residue stretch at 2609-2649 (DENECLSAHVCGGASCHNTLGSYKCMCPTGFQYEQFSGGCQ) folds into the EGF-like 46; calcium-binding domain. Residue serine 2630 is glycosylated (O-linked (Glc) serine). The EGF-like 47; calcium-binding domain maps to 2650–2689 (DINECGSSQAPCSYGCSNTEGGYLCGCPPGYFRIGQGHCV). Serine 2704, serine 2705, and serine 2711 each carry phosphoserine. The disordered stretch occupies residues 2728–2747 (RGRKRRSTNETDASDIQDGS). N-linked (GlcNAc...) asparagine glycans are attached at residues asparagine 2736, asparagine 2752, and asparagine 2769.

This sequence belongs to the fibrillin family. As to quaternary structure, interacts with COL16A1. Interacts with integrin alpha-V/beta-3. Interacts with ADAMTS10; this interaction promotes microfibril assembly. Interacts with THSD4; this interaction promotes fibril formation. Interacts (via N-terminal domain) with FBLN2 and FBLN5. Interacts with ELN. Forms a ternary complex with ELN and FBLN2 or FBLN5 and a significant interaction with ELN seen only in the presence of FBLN2 or FBLN5. Interacts (via N-terminal domain) with LTBP2 (via C-terminal domain) in a Ca(+2)-dependent manner. Interacts (via N-terminal domain) with LTBP1 (via C-terminal domain). Interacts with integrins ITGA5:ITGB1, ITGAV:ITGB3 and ITGAV:ITGB6. Interacts (via N-terminal domain) with BMP2, BMP4, BMP7, BMP10 and GDF5. Interacts (via N-terminal domain) with MFAP2 and MFAP5. Interacts with ADAMTSL5. Interacts with MFAP4. Interacts (via N-terminal domain) with TNFSF11 in a Ca(+2)-dependent manner. Interacts (via N-terminal domain) with EFEMP2; this interaction inhibits EFEMP2 binding to LOX and ELN. In terms of processing, cleavage of N- and C-terminus by furin is required for incorporation into the extracellular matrix and assembly into microfibrils. The C-terminus, which corresponds to the Asprosin chain, was initially thought to constitute a propeptide. Fibrillin-1 and Asprosin chains are still linked together during the secretion from cells, but are subsequently separated by furin, an essential step for incorporation of Fibrillin-1 into the nascent microfibrils. Forms intermolecular disulfide bonds either with other fibrillin-1 molecules or with other components of the microfibrils. Post-translationally, O-glycosylated on serine residues by POGLUT2 and POGLUT3 which is necessary for efficient protein secretion. As to expression, strongly expressed during the first week of osteoblast differentiation. Secreted by white adipose tissue (at protein level).

Its subcellular location is the secreted. The protein resides in the extracellular space. It is found in the extracellular matrix. In terms of biological role, structural component of the 10-12 nm diameter microfibrils of the extracellular matrix, which conveys both structural and regulatory properties to load-bearing connective tissues. Fibrillin-1-containing microfibrils provide long-term force bearing structural support. In tissues such as the lung, blood vessels and skin, microfibrils form the periphery of the elastic fiber, acting as a scaffold for the deposition of elastin. In addition, microfibrils can occur as elastin-independent networks in tissues such as the ciliary zonule, tendon, cornea and glomerulus where they provide tensile strength and have anchoring roles. Fibrillin-1 also plays a key role in tissue homeostasis through specific interactions with growth factors, such as the bone morphogenetic proteins (BMPs), growth and differentiation factors (GDFs) and latent transforming growth factor-beta-binding proteins (LTBPs), cell-surface integrins and other extracellular matrix protein and proteoglycan components. Regulates osteoblast maturation by controlling TGF-beta bioavailability and calibrating TGF-beta and BMP levels, respectively. Negatively regulates osteoclastogenesis by binding and sequestering an osteoclast differentiation and activation factor TNFSF11. This leads to disruption of TNFSF11-induced Ca(2+) signaling and impairment of TNFSF11-mediated nuclear translocation and activation of transcription factor NFATC1 which regulates genes important for osteoclast differentiation and function. Mediates cell adhesion via its binding to cell surface receptors integrins ITGAV:ITGB3 and ITGA5:ITGB1. Binds heparin and this interaction plays an important role in the assembly of microfibrils. Adipokine secreted by white adipose tissue that plays an important regulatory role in the glucose metabolism of liver, muscle and pancreas. Hormone that targets the liver in response to fasting to increase plasma glucose levels. Binds the olfactory receptor Olfr734 at the surface of hepatocytes and promotes hepatocyte glucose release by activating the protein kinase A activity in the liver, resulting in rapid glucose release into the circulation. May act as a regulator of adaptive thermogenesis by inhibiting browning and energy consumption, while increasing lipid deposition in white adipose tissue. Also acts as an orexigenic hormone that increases appetite: crosses the blood brain barrier and exerts effects on the hypothalamus. In the arcuate nucleus of the hypothalamus, asprosin directly activates orexigenic AgRP neurons and indirectly inhibits anorexigenic POMC neurons, resulting in appetite stimulation. Activates orexigenic AgRP neurons via binding to the olfactory receptor Olfr734. May also play a role in sperm motility in testis via interaction with Olfr734 receptor. This Mus musculus (Mouse) protein is Fibrillin-1.